An 88-amino-acid chain; its full sequence is Alpha-latrotoxin-associated low molecular weight protein (88 aa).

The first 18 residues, Met-1–Ala-18, serve as a signal peptide directing secretion.

The protein belongs to the arthropod CHH/MIH/GIH/VIH hormone family. In terms of tissue distribution, expressed by the venom gland.

The protein resides in the secreted. May increase the toxicity of alpha-latrotoxin and/or other venom components. Is non-toxic to mice and to the cockroach Periplaneta americana. The sequence is that of Alpha-latrotoxin-associated low molecular weight protein from Latrodectus tredecimguttatus (Mediterranean black widow spider).